The following is a 741-amino-acid chain: Lamin-B receptor (741 aa).

Positions 29–126 (RLRRPRRTED…TGSGSGSSLP (98 aa)) are disordered. Low complexity-rich tracts occupy residues 57-84 (TRRTGSVTAAGATATATATAGPATRTRA) and 109-126 (PRSSVGPLTGSGSGSSLP). Residue serine 111 is modified to Phosphoserine. Phosphothreonine is present on threonine 135. The residue at position 144 (serine 144) is a Phosphoserine. The span at 160-184 (TNTSSGAPNKAFNTSSVNSGNSFSR) shows a compositional bias: polar residues. The disordered stretch occupies residues 160–194 (TNTSSGAPNKAFNTSSVNSGNSFSRTTTSSTTTTT). Over residues 185–194 (TTTSSTTTTT) the composition is skewed to low complexity. Phosphoserine is present on residues serine 223 and serine 225. The segment covering 231-240 (LAGTPVTNTE) has biased composition (polar residues). The interval 231-277 (LAGTPVTNTEEGSRYSRSVSRSVYDDEKSSKRSYSTGEEDIDEEDEL) is disordered. Residues threonine 234 and threonine 237 each carry the phosphothreonine modification. Residues serine 243, serine 246, serine 248, serine 250, and serine 263 each carry the phosphoserine modification. Threonine 266 carries the phosphothreonine modification. A compositionally biased stretch (acidic residues) spans 267 to 277 (GEEDIDEEDEL). Residue serine 284 is modified to Phosphoserine. Threonine 288 is subject to Phosphothreonine. At serine 291 the chain carries Phosphoserine. Phosphothreonine is present on threonine 293. A Phosphoserine modification is found at serine 298. The next 8 helical transmembrane spans lie at 308-328 (FGGWLGAFLFLLLLPTAVYYL), 363-383 (VVGAFAAYQVVVFLLVALLPG), 402-422 (LTLLIASGVAEYLKYPVVTFV), 429-449 (FCIFGLVGAFVAAAWSYWLVD), 497-517 (LSLVTTLIYATCYIYQTLVWP), 543-563 (PATLFSASCLLFYVLDAIIFE), 577-599 (YGCLLLLRYAATPYLLTAVTKYF), and 604-624 (VPISCWYAPLAVAALLSLGLL). Residues serine 640 and serine 642 each carry the phosphoserine modification. A helical membrane pass occupies residues 687 to 707 (MALRPAWPPVLGLSLIILLLL).

Belongs to the ERG4/ERG24 family. In terms of assembly, interacts directly with LAM.

It localises to the nucleus inner membrane. Functionally, anchors the lamina and the heterochromatin to the inner nuclear membrane. The sequence is that of Lamin-B receptor from Drosophila melanogaster (Fruit fly).